A 106-amino-acid chain; its full sequence is uncharacterized protein (106 aa).

This is an uncharacterized protein from Rickettsia prowazekii (strain Madrid E).